A 41-amino-acid chain; its full sequence is Large ribosomal subunit protein bL36 (41 aa).

Belongs to the bacterial ribosomal protein bL36 family.

This Agrobacterium fabrum (strain C58 / ATCC 33970) (Agrobacterium tumefaciens (strain C58)) protein is Large ribosomal subunit protein bL36 (rpmJ).